A 446-amino-acid chain; its full sequence is Glutamate-1-semialdehyde 2,1-aminomutase (446 aa).

Lys263 carries the N6-(pyridoxal phosphate)lysine modification.

It belongs to the class-III pyridoxal-phosphate-dependent aminotransferase family. HemL subfamily. The cofactor is pyridoxal 5'-phosphate.

The protein resides in the cytoplasm. The enzyme catalyses (S)-4-amino-5-oxopentanoate = 5-aminolevulinate. It functions in the pathway porphyrin-containing compound metabolism; protoporphyrin-IX biosynthesis; 5-aminolevulinate from L-glutamyl-tRNA(Glu): step 2/2. This chain is Glutamate-1-semialdehyde 2,1-aminomutase, found in Haloquadratum walsbyi (strain DSM 16790 / HBSQ001).